The chain runs to 107 residues: Phosphoribosyl-ATP pyrophosphatase (107 aa).

It belongs to the PRA-PH family.

It is found in the cytoplasm. The catalysed reaction is 1-(5-phospho-beta-D-ribosyl)-ATP + H2O = 1-(5-phospho-beta-D-ribosyl)-5'-AMP + diphosphate + H(+). It functions in the pathway amino-acid biosynthesis; L-histidine biosynthesis; L-histidine from 5-phospho-alpha-D-ribose 1-diphosphate: step 2/9. The protein is Phosphoribosyl-ATP pyrophosphatase of Methylobacterium radiotolerans (strain ATCC 27329 / DSM 1819 / JCM 2831 / NBRC 15690 / NCIMB 10815 / 0-1).